The sequence spans 489 residues: CUGBP Elav-like family member 1-A (489 aa).

RRM domains follow at residues 16–99 (IKMF…PADS), 108–188 (RKLF…FADT), and 404–482 (ANLF…LKRS). The tract at residues 183-210 (VKFADTQKDKEQKRMTQQLQQQMQQLNA) is necessary for oligomerization and EDEN-dependent deadenylation.

Belongs to the CELF/BRUNOL family. In terms of assembly, oligomer. Oligomerization is required for RNA-binding and EDEN-dependent deadenylation. Phosphorylated during oocyte maturation and dephosphorylated following egg activation. Dephosphorylation is calcium dependent and correlates with the increase in the activity of EDEN-dependent deadenylation.

It localises to the nucleus. It is found in the cytoplasm. In terms of biological role, RNA-binding protein implicated in the regulation of several post-transcriptional events. May be involved in pre-mRNA alternative splicing, mRNA translation activation and stability. Mediates the rapid and sequence-specific cytoplasmic deadenylation of EDEN-containing maternal mRNAs following fertilization. Binds to AU-rich sequences (AREs) of jun mRNA. Binds to the embryonic deadenylation element (EDEN) motif localized in the 3'-UTR of maternal mRNAs. Binds to RNA containing several repeats of the consensus sequence 5'-UGU-3'. EDEN-dependent deadenylation is enhanced by the presence of an additional cis element composed of three AUU repeats. This Xenopus laevis (African clawed frog) protein is CUGBP Elav-like family member 1-A (cugbp1-a).